The sequence spans 367 residues: Embryonic developmental protein tofu-6 (367 aa).

The RRM domain maps to 13-92 (AGFHIRNIPK…FTLKVTDHKN (80 aa)). The interval 298-345 (KSILADRLQRKGVCEYLPRSQQPHYAYSRETLLQHNNSGVTAQISNDA) is required for ife-3 interaction.

In terms of assembly, component of the pid-1 variant of the PETISCO complex (also called the pid-3, erh-2, tofu-6, and ife-3 small RNA complex) containing at least pid-1, tofu-6, ife-3, pid-3, and erh-2, which is required for the biogenesis of 21 nucleotide PIWI-interacting RNAs (piRNAs) that possess a uracil residue at the 5'-end (also called 21U-RNAs). Within the pid-1 variant of the PETISCO complex interacts with pid-1. Component of the tost-1 variant of the PETISCO complex (also called the pid-3, erh-2, tofu-6, and ife-3 small RNA complex) containing at least tost-1, tofu-6, ife-3, pid-3, and erh-2, which plays an essential role in embryogenesis. Within the tost-1 variant of the PETISCO complex interacts with tost-1. Within the pid-1 and tost-1 variants of the PETISCO complexes interacts (via C-terminus) with ife-3. Within the pid-1 and tost-1 variants of the PETISCO complexes interacts (via the RRM domain) with pid-3. Within the pid-1 and tost-1 variants of the PETISCO complexes interacts (via the RRM domain) with erh-2. In contrast to the pid-1 variant of the PETISCO complex, the tost-1 variant of the PETISCO complex plays a minor role in the biogenesis of 21U-RNAs. Interacts (via residues 120-314) with the PUCH complex subunit tofu-1 (via residues 82-172); the interaction between the PETISCO and PUCH complex members enhances piRNA production in vivo. As to expression, expression is restricted to the germline (at protein level).

The protein localises to the cytoplasm. The protein resides in the perinuclear region. It localises to the nucleus. In terms of biological role, component of the pid-1 and tost-1 variants of the PETISCO complexes, which have roles in the biogenesis of a class of 21 nucleotide PIWI-interacting RNAs (piRNAs) that possess a uracil residue at the 5'-end (also called 21U-RNAs) and embryogenesis, respectively. Promotes the biogenesis of 21U-RNAs. Mediates the interaction between the PETISCO complex and the PUCH complex, the endoribonuclease complex processing the 5'-end of precursor piRNAs, thereby enhancing mature piRNA production. Required for chromosome segregation and cell division in early embryos. May have a role in DNA replication. This chain is Embryonic developmental protein tofu-6, found in Caenorhabditis elegans.